Reading from the N-terminus, the 254-residue chain is MLPFGLVAALLLAAGPRPSLGDEAIHCPPCSEEKLARCRPPVGCEELVREPGCGCCATCALGLGMPCGVYTPRCGSGMRCYPPRGVEKPLRTLMHGQGVCTELSEIEAIQESLQTSDKDESEHPNNSFNPCSAHDHRCLQKHMAKVRDRSKMKVVGTPREEPRPVPQGSCQSELHRALERLAASQSRTHEDLFIIPIPNCDRNGNFHPKQCHPALDGQRGKCWCVDRKTGVKLPGGLEPKGELDCHQLADSLQE.

Residues 1–21 (MLPFGLVAALLLAAGPRPSLG) form the signal peptide. An IGFBP N-terminal domain is found at 23 to 103 (EAIHCPPCSE…MHGQGVCTEL (81 aa)). 6 disulfides stabilise this stretch: cysteine 27–cysteine 53, cysteine 30–cysteine 55, cysteine 38–cysteine 56, cysteine 44–cysteine 59, cysteine 67–cysteine 80, and cysteine 74–cysteine 100. Asparagine 125 carries an N-linked (GlcNAc...) asparagine glycan. A disulfide bridge links cysteine 131 with cysteine 138. Residues 149-169 (RSKMKVVGTPREEPRPVPQGS) form a disordered region. The Thyroglobulin type-1 domain maps to 167–245 (QGSCQSELHR…GLEPKGELDC (79 aa)). Intrachain disulfides connect cysteine 170–cysteine 200, cysteine 211–cysteine 222, and cysteine 224–cysteine 245. Phosphoserine is present on serine 251.

As to quaternary structure, binds IGF2 more than IGF1.

It localises to the secreted. Functionally, IGF-binding proteins prolong the half-life of the IGFs and have been shown to either inhibit or stimulate the growth promoting effects of the IGFs on cell culture. They alter the interaction of IGFs with their cell surface receptors. The polypeptide is Insulin-like growth factor-binding protein 4 (Igfbp4) (Rattus norvegicus (Rat)).